The primary structure comprises 260 residues: Imidazole glycerol phosphate synthase subunit HisF (260 aa).

Residues D11 and D130 contribute to the active site.

This sequence belongs to the HisA/HisF family. In terms of assembly, heterodimer of HisH and HisF.

It is found in the cytoplasm. The catalysed reaction is 5-[(5-phospho-1-deoxy-D-ribulos-1-ylimino)methylamino]-1-(5-phospho-beta-D-ribosyl)imidazole-4-carboxamide + L-glutamine = D-erythro-1-(imidazol-4-yl)glycerol 3-phosphate + 5-amino-1-(5-phospho-beta-D-ribosyl)imidazole-4-carboxamide + L-glutamate + H(+). It participates in amino-acid biosynthesis; L-histidine biosynthesis; L-histidine from 5-phospho-alpha-D-ribose 1-diphosphate: step 5/9. In terms of biological role, IGPS catalyzes the conversion of PRFAR and glutamine to IGP, AICAR and glutamate. The HisF subunit catalyzes the cyclization activity that produces IGP and AICAR from PRFAR using the ammonia provided by the HisH subunit. The sequence is that of Imidazole glycerol phosphate synthase subunit HisF from Psychrobacter arcticus (strain DSM 17307 / VKM B-2377 / 273-4).